Here is a 156-residue protein sequence, read N- to C-terminus: 6,7-dimethyl-8-ribityllumazine synthase (156 aa).

5-amino-6-(D-ribitylamino)uracil is bound by residues Phe22, 57 to 59 (AVE), and 81 to 83 (TVI). Residue 86 to 87 (GT) participates in (2S)-2-hydroxy-3-oxobutyl phosphate binding. The Proton donor role is filled by His89. Position 114 (Phe114) interacts with 5-amino-6-(D-ribitylamino)uracil. Arg128 lines the (2S)-2-hydroxy-3-oxobutyl phosphate pocket.

It belongs to the DMRL synthase family. Forms an icosahedral capsid composed of 60 subunits, arranged as a dodecamer of pentamers.

The catalysed reaction is (2S)-2-hydroxy-3-oxobutyl phosphate + 5-amino-6-(D-ribitylamino)uracil = 6,7-dimethyl-8-(1-D-ribityl)lumazine + phosphate + 2 H2O + H(+). Its pathway is cofactor biosynthesis; riboflavin biosynthesis; riboflavin from 2-hydroxy-3-oxobutyl phosphate and 5-amino-6-(D-ribitylamino)uracil: step 1/2. In terms of biological role, catalyzes the formation of 6,7-dimethyl-8-ribityllumazine by condensation of 5-amino-6-(D-ribitylamino)uracil with 3,4-dihydroxy-2-butanone 4-phosphate. This is the penultimate step in the biosynthesis of riboflavin. The chain is 6,7-dimethyl-8-ribityllumazine synthase from Vibrio campbellii (strain ATCC BAA-1116).